The sequence spans 120 residues: UPF0102 protein CBU_1742 (120 aa).

This sequence belongs to the UPF0102 family.

The polypeptide is UPF0102 protein CBU_1742 (Coxiella burnetii (strain RSA 493 / Nine Mile phase I)).